The chain runs to 66 residues: Large ribosomal subunit protein uL29 (66 aa).

This sequence belongs to the universal ribosomal protein uL29 family.

The sequence is that of Large ribosomal subunit protein uL29 from Roseiflexus castenholzii (strain DSM 13941 / HLO8).